Consider the following 130-residue polypeptide: T-cell receptor beta chain V region A20.2.25 (130 aa).

Residues 1-21 (MSCRLLLYVSLCLVETALMNT) form the signal peptide. Residues 22–112 (KITQSPRYLI…DSAVYFCASS (91 aa)) are v segment. N-linked (GlcNAc...) asparagine glycans are attached at residues Asn-36 and Asn-75. The interval 113 to 115 (HGE) is d segment. Residues 116-130 (NTEVFFGKGTTLTVV) form a j segment region.

This is T-cell receptor beta chain V region A20.2.25 from Mus musculus (Mouse).